We begin with the raw amino-acid sequence, 348 residues long: Heat-inducible transcription repressor HrcA (348 aa).

The protein belongs to the HrcA family.

In terms of biological role, negative regulator of class I heat shock genes (grpE-dnaK-dnaJ and groELS operons). Prevents heat-shock induction of these operons. This Thermodesulfovibrio yellowstonii (strain ATCC 51303 / DSM 11347 / YP87) protein is Heat-inducible transcription repressor HrcA.